We begin with the raw amino-acid sequence, 264 residues long: Acetyl-coenzyme A carboxylase carboxyl transferase subunit beta (264 aa).

Residues 4 to 264 (LWVKCKQCQQ…CGNSLEGVES (261 aa)) enclose the CoA carboxyltransferase N-terminal domain. Positions 8, 11, 27, and 29 each coordinate Zn(2+). Residues 8 to 29 (CKQCQQILLTKELEKNLKVCRC) form a C4-type zinc finger.

It belongs to the AccD/PCCB family. As to quaternary structure, acetyl-CoA carboxylase is a heterohexamer composed of biotin carboxyl carrier protein (AccB), biotin carboxylase (AccC) and two subunits each of ACCase subunit alpha (AccA) and ACCase subunit beta (AccD). Zn(2+) is required as a cofactor.

Its subcellular location is the cytoplasm. The enzyme catalyses N(6)-carboxybiotinyl-L-lysyl-[protein] + acetyl-CoA = N(6)-biotinyl-L-lysyl-[protein] + malonyl-CoA. Its pathway is lipid metabolism; malonyl-CoA biosynthesis; malonyl-CoA from acetyl-CoA: step 1/1. Component of the acetyl coenzyme A carboxylase (ACC) complex. Biotin carboxylase (BC) catalyzes the carboxylation of biotin on its carrier protein (BCCP) and then the CO(2) group is transferred by the transcarboxylase to acetyl-CoA to form malonyl-CoA. This Heliobacterium modesticaldum (strain ATCC 51547 / Ice1) protein is Acetyl-coenzyme A carboxylase carboxyl transferase subunit beta.